Reading from the N-terminus, the 471-residue chain is Collagen alpha-3(IV) chain (471 aa).

Residues 1–238 (GLPGRKGPVG…KGKPGDTGPP (238 aa)) form a triple-helical region region. A disordered region spans residues 1-241 (GLPGRKGPVG…PGDTGPPAAG (241 aa)). Over residues 52-61 (MPGPPGPPGS) the composition is skewed to pro residues. The Cell attachment site signature appears at 106-108 (RGD). The span at 127–141 (PGPPGPPGQSGPKGP) shows a compositional bias: pro residues. Over residues 165–174 (SAGEPGMQGE) the composition is skewed to low complexity. Residues 175–187 (PGPPGPPGDPGPC) show a composition bias toward pro residues. Hydroxyproline occurs at positions 232 and 238. A Collagen IV NC1 domain is found at 246-470 (GFVFTRHSQT…SRCQVCMKMR (225 aa)). 6 disulfides stabilise this stretch: Cys261-Cys352, Cys294-Cys349, Cys306-Cys312, Cys371-Cys466, Cys405-Cys463, and Cys417-Cys423. An S-Lysyl-methionine sulfilimine (Met-Lys) (interchain with K-452) cross-link involves residue Met334. Residue Lys452 forms an S-Lysyl-methionine sulfilimine (Lys-Met) (interchain with M-334) linkage.

The protein belongs to the type IV collagen family. In terms of assembly, there are six type IV collagen isoforms, alpha 1(IV)-alpha 6(IV), each of which can form a triple helix structure with 2 other chains to generate type IV collagen network. The alpha 3(IV) chain forms a triple helical protomer with alpha 4(IV) and alpha 5(IV); this triple helical structure dimerizes through NC1-NC1 domain interactions such that the alpha 3(IV), alpha 4(IV) and alpha 5(IV) chains of one protomer connect with the alpha 5(IV), alpha 4(IV) and alpha 3(IV) chains of the opposite promoter, respectively. Interacts with ITGB3. Associates with LAMB2 at the neuromuscular junction and in GBM. Post-translationally, prolines at the third position of the tripeptide repeating unit (G-X-Y) are hydroxylated in some or all of the chains. In terms of processing, type IV collagens contain numerous cysteine residues which are involved in inter- and intramolecular disulfide bonding. 12 of these, located in the NC1 domain, are conserved in all known type IV collagens. The trimeric structure of the NC1 domains is stabilized by covalent bonds between Lys and Met residues. Post-translationally, phosphorylated. Thought to be phosphorylated by CERT, but CERT does not have kinase activity.

Its subcellular location is the secreted. It is found in the extracellular space. It localises to the extracellular matrix. The protein localises to the basement membrane. In terms of biological role, type IV collagen is the major structural component of glomerular basement membranes (GBM), forming a 'chicken-wire' meshwork together with laminins, proteoglycans and entactin/nidogen. This is Collagen alpha-3(IV) chain (COL4A3) from Bos taurus (Bovine).